Reading from the N-terminus, the 321-residue chain is Lipoyl synthase (321 aa).

Residues Cys68, Cys73, Cys79, Cys94, Cys98, Cys101, and Ser308 each coordinate [4Fe-4S] cluster. The region spanning 80-297 (FNHGTATFMI…KALADELGFT (218 aa)) is the Radical SAM core domain.

It belongs to the radical SAM superfamily. Lipoyl synthase family. The cofactor is [4Fe-4S] cluster.

Its subcellular location is the cytoplasm. The catalysed reaction is [[Fe-S] cluster scaffold protein carrying a second [4Fe-4S](2+) cluster] + N(6)-octanoyl-L-lysyl-[protein] + 2 oxidized [2Fe-2S]-[ferredoxin] + 2 S-adenosyl-L-methionine + 4 H(+) = [[Fe-S] cluster scaffold protein] + N(6)-[(R)-dihydrolipoyl]-L-lysyl-[protein] + 4 Fe(3+) + 2 hydrogen sulfide + 2 5'-deoxyadenosine + 2 L-methionine + 2 reduced [2Fe-2S]-[ferredoxin]. It functions in the pathway protein modification; protein lipoylation via endogenous pathway; protein N(6)-(lipoyl)lysine from octanoyl-[acyl-carrier-protein]: step 2/2. Functionally, catalyzes the radical-mediated insertion of two sulfur atoms into the C-6 and C-8 positions of the octanoyl moiety bound to the lipoyl domains of lipoate-dependent enzymes, thereby converting the octanoylated domains into lipoylated derivatives. In Shewanella frigidimarina (strain NCIMB 400), this protein is Lipoyl synthase.